Reading from the N-terminus, the 319-residue chain is tRNA-cytidine(32) 2-sulfurtransferase (319 aa).

Residues 43-48 carry the PP-loop motif motif; that stretch reads SGGKDS. [4Fe-4S] cluster-binding residues include cysteine 118, cysteine 121, and cysteine 209.

The protein belongs to the TtcA family. Homodimer. It depends on Mg(2+) as a cofactor. The cofactor is [4Fe-4S] cluster.

Its subcellular location is the cytoplasm. It carries out the reaction cytidine(32) in tRNA + S-sulfanyl-L-cysteinyl-[cysteine desulfurase] + AH2 + ATP = 2-thiocytidine(32) in tRNA + L-cysteinyl-[cysteine desulfurase] + A + AMP + diphosphate + H(+). It functions in the pathway tRNA modification. Functionally, catalyzes the ATP-dependent 2-thiolation of cytidine in position 32 of tRNA, to form 2-thiocytidine (s(2)C32). The sulfur atoms are provided by the cysteine/cysteine desulfurase (IscS) system. The sequence is that of tRNA-cytidine(32) 2-sulfurtransferase from Neisseria meningitidis serogroup A / serotype 4A (strain DSM 15465 / Z2491).